Reading from the N-terminus, the 226-residue chain is ATP synthase F(0) complex subunit a (226 aa).

6 consecutive transmembrane segments (helical) span residues 6–26 (FASFITPVILGLPLVTLIVLF), 68–88 (WALMLMSLILFIGSTNLLGLL), 97–117 (QLSMNLGMAIPLWAGAVITGF), 138–158 (IPMLVIIETISLFIQPVALAV), 164–184 (ITAGHLLIHLIGGATLALMSI), and 189–209 (ALITFTILILLTILEFAVAMI).

It belongs to the ATPase A chain family. In terms of assembly, component of the ATP synthase complex composed at least of ATP5F1A/subunit alpha, ATP5F1B/subunit beta, ATP5MC1/subunit c (homooctomer), MT-ATP6/subunit a, MT-ATP8/subunit 8, ATP5ME/subunit e, ATP5MF/subunit f, ATP5MG/subunit g, ATP5MK/subunit k, ATP5MJ/subunit j, ATP5F1C/subunit gamma, ATP5F1D/subunit delta, ATP5F1E/subunit epsilon, ATP5PF/subunit F6, ATP5PB/subunit b, ATP5PD/subunit d, ATP5PO/subunit OSCP. ATP synthase complex consists of a soluble F(1) head domain (subunits alpha(3) and beta(3)) - the catalytic core - and a membrane F(0) domain - the membrane proton channel (subunits c, a, 8, e, f, g, k and j). These two domains are linked by a central stalk (subunits gamma, delta, and epsilon) rotating inside the F1 region and a stationary peripheral stalk (subunits F6, b, d, and OSCP). Interacts with DNAJC30; interaction is direct.

Its subcellular location is the mitochondrion inner membrane. It catalyses the reaction H(+)(in) = H(+)(out). In terms of biological role, subunit a, of the mitochondrial membrane ATP synthase complex (F(1)F(0) ATP synthase or Complex V) that produces ATP from ADP in the presence of a proton gradient across the membrane which is generated by electron transport complexes of the respiratory chain. ATP synthase complex consist of a soluble F(1) head domain - the catalytic core - and a membrane F(1) domain - the membrane proton channel. These two domains are linked by a central stalk rotating inside the F(1) region and a stationary peripheral stalk. During catalysis, ATP synthesis in the catalytic domain of F(1) is coupled via a rotary mechanism of the central stalk subunits to proton translocation. With the subunit c (ATP5MC1), forms the proton-conducting channel in the F(0) domain, that contains two crucial half-channels (inlet and outlet) that facilitate proton movement from the mitochondrial intermembrane space (IMS) into the matrix. Protons are taken up via the inlet half-channel and released through the outlet half-channel, following a Grotthuss mechanism. The polypeptide is ATP synthase F(0) complex subunit a (Bos indicus (Zebu)).